The primary structure comprises 398 residues: Acetate kinase (398 aa).

Asn-8 is a Mg(2+) binding site. ATP is bound at residue Lys-15. Substrate is bound at residue Arg-89. The active-site Proton donor/acceptor is Asp-146. ATP contacts are provided by residues 206–210 (HIGNG), 283–285 (DMR), and 331–335 (GMGEN). Residue Glu-383 coordinates Mg(2+).

It belongs to the acetokinase family. In terms of assembly, homodimer. Mg(2+) is required as a cofactor. Mn(2+) serves as cofactor.

The protein resides in the cytoplasm. It carries out the reaction acetate + ATP = acetyl phosphate + ADP. The protein operates within metabolic intermediate biosynthesis; acetyl-CoA biosynthesis; acetyl-CoA from acetate: step 1/2. Functionally, catalyzes the formation of acetyl phosphate from acetate and ATP. Can also catalyze the reverse reaction. This chain is Acetate kinase, found in Streptococcus pyogenes serotype M4 (strain MGAS10750).